A 339-amino-acid chain; its full sequence is Anthranilate phosphoribosyltransferase (339 aa).

Residues Gly-80, 83 to 84, 90 to 93, 108 to 116, and Ser-120 contribute to the 5-phospho-alpha-D-ribose 1-diphosphate site; these read GD, NVST, and KHGNRSVTS. Gly-80 provides a ligand contact to anthranilate. A Mg(2+)-binding site is contributed by Ser-92. Asn-111 provides a ligand contact to anthranilate. An anthranilate-binding site is contributed by Arg-166. 2 residues coordinate Mg(2+): Asp-225 and Glu-226.

The protein belongs to the anthranilate phosphoribosyltransferase family. As to quaternary structure, homodimer. Mg(2+) serves as cofactor.

It catalyses the reaction N-(5-phospho-beta-D-ribosyl)anthranilate + diphosphate = 5-phospho-alpha-D-ribose 1-diphosphate + anthranilate. Its pathway is amino-acid biosynthesis; L-tryptophan biosynthesis; L-tryptophan from chorismate: step 2/5. In terms of biological role, catalyzes the transfer of the phosphoribosyl group of 5-phosphorylribose-1-pyrophosphate (PRPP) to anthranilate to yield N-(5'-phosphoribosyl)-anthranilate (PRA). This Ignicoccus hospitalis (strain KIN4/I / DSM 18386 / JCM 14125) protein is Anthranilate phosphoribosyltransferase.